We begin with the raw amino-acid sequence, 119 residues long: NADH-quinone oxidoreductase subunit A (119 aa).

The next 3 helical transmembrane spans lie at 9–29, 63–83, and 88–108; these read VILF…LGFL, LVAI…PWAV, and IGAT…VGFV.

Belongs to the complex I subunit 3 family. NDH-1 is composed of 14 different subunits. Subunits NuoA, H, J, K, L, M, N constitute the membrane sector of the complex.

The protein resides in the cell inner membrane. It carries out the reaction a quinone + NADH + 5 H(+)(in) = a quinol + NAD(+) + 4 H(+)(out). In terms of biological role, NDH-1 shuttles electrons from NADH, via FMN and iron-sulfur (Fe-S) centers, to quinones in the respiratory chain. The immediate electron acceptor for the enzyme in this species is believed to be ubiquinone. Couples the redox reaction to proton translocation (for every two electrons transferred, four hydrogen ions are translocated across the cytoplasmic membrane), and thus conserves the redox energy in a proton gradient. In Leptothrix cholodnii (strain ATCC 51168 / LMG 8142 / SP-6) (Leptothrix discophora (strain SP-6)), this protein is NADH-quinone oxidoreductase subunit A.